Reading from the N-terminus, the 127-residue chain is Protein NEGATIVE REGULATOR OF RESISTANCE (127 aa).

Disordered stretches follow at residues 1 to 28 and 47 to 127; these read MDAT…VDEV and TRRL…RAPA. Residues 112-127 show a composition bias toward low complexity; sequence PPSDAPATPRSARAPA.

This sequence belongs to the NPR1-interactor family. In terms of assembly, interacts with NPR1/NH1. Interacts with NPR3/NH3.

It is found in the nucleus. In terms of biological role, acts as a negative regulator of disease resistance. Acts on basal resistance, age-related resistance and resistance mediated by the LRR receptor kinase XA21. Plants over-expressing NRR display enhanced susceptibility to the bacterial blight Xanthomonas oryzae pv. oryzae (Xoo). Binds to and represses NPR1/NH1-mediated transcriptional activation of LG2 in vitro. The chain is Protein NEGATIVE REGULATOR OF RESISTANCE from Oryza sativa subsp. japonica (Rice).